The following is a 594-amino-acid chain: F-box/LRR-repeat protein At3g58980 (594 aa).

The region spanning 1 to 49 is the F-box domain; that stretch reads MDRISNLPNEIICHIVSFLSAKEAAFASILSKRWRNLFTIVIKLQFDDS. 15 LRR repeats span residues 103 to 125, 128 to 151, 152 to 174, 203 to 218, 219 to 242, 249 to 272, 288 to 314, 315 to 339, 344 to 369, 403 to 414, 415 to 437, 450 to 474, 503 to 518, 519 to 541, and 584 to 594; these read ILDL…VFTC, LVKL…DAFL, PALE…AFEK, SPTL…DLYE, CEFT…AVPD, LDSL…GYVD, LRNV…AIPV, FKNL…FLPF, CPNL…VCHC, LEKLSGLKLVKL, HSLT…SSKC, LPSL…AFQK, SQTL…YWAE, HNLE…AHVP, and LRNVEILRLWM.

This Arabidopsis thaliana (Mouse-ear cress) protein is F-box/LRR-repeat protein At3g58980.